We begin with the raw amino-acid sequence, 450 residues long: tRNA-2-methylthio-N(6)-dimethylallyladenosine synthase (450 aa).

One can recognise an MTTase N-terminal domain in the interval 14–132 (GEFFIETWGC…FPNYLNEVKK (119 aa)). Positions 23, 59, 93, 169, 173, and 176 each coordinate [4Fe-4S] cluster. Residues 155-385 (RKNSMKAFVT…VEVLNEISAK (231 aa)) enclose the Radical SAM core domain. The TRAM domain maps to 388–450 (KAYEGKIEEV…NSFSLTGEEI (63 aa)).

It belongs to the methylthiotransferase family. MiaB subfamily. As to quaternary structure, monomer. It depends on [4Fe-4S] cluster as a cofactor.

The protein localises to the cytoplasm. The catalysed reaction is N(6)-dimethylallyladenosine(37) in tRNA + (sulfur carrier)-SH + AH2 + 2 S-adenosyl-L-methionine = 2-methylsulfanyl-N(6)-dimethylallyladenosine(37) in tRNA + (sulfur carrier)-H + 5'-deoxyadenosine + L-methionine + A + S-adenosyl-L-homocysteine + 2 H(+). Catalyzes the methylthiolation of N6-(dimethylallyl)adenosine (i(6)A), leading to the formation of 2-methylthio-N6-(dimethylallyl)adenosine (ms(2)i(6)A) at position 37 in tRNAs that read codons beginning with uridine. This is tRNA-2-methylthio-N(6)-dimethylallyladenosine synthase from Clostridium botulinum (strain ATCC 19397 / Type A).